Reading from the N-terminus, the 208-residue chain is Putative 3-methyladenine DNA glycosylase (208 aa).

It belongs to the DNA glycosylase MPG family.

The sequence is that of Putative 3-methyladenine DNA glycosylase from Lactobacillus johnsonii (strain CNCM I-12250 / La1 / NCC 533).